We begin with the raw amino-acid sequence, 138 residues long: Centromere protein S (138 aa).

Position 1 is an N-acetylmethionine (methionine 1). Residues 112–138 are disordered; that stretch reads AKKKKKLEDENRNSVESAEAGVEESEN.

It belongs to the TAF9 family. CENP-S/MHF1 subfamily. Heterodimer with CENPX, sometimes called MHF; this interaction stabilizes both partners. MHF heterodimers can assemble to form tetrameric structures. MHF also coassemble with CENPT-CENPW heterodimers at centromeres to form the tetrameric CENP-T-W-S-X complex. Forms a discrete complex with FANCM and CENPX, called FANCM-MHF; this interaction, probably mediated by direct binding between CENPS and FANCM, leads to synergistic activation of double-stranded DNA binding and strongly stimulates FANCM-mediated DNA remodeling. Recruited by FANCM to the Fanconi anemia (FA) core complex, which consists of CENPS, CENPX, FANCA, FANCB, FANCC, FANCE, FANCF, FANCG, FANCL, FANCM, FAAP24 and FAAP100. The FA core complex associates with Bloom syndrome (BLM) complex, which consists of at least BLM, DNA topoisomerase 3-alpha (TOP3A), RMI1/BLAP75, RPA1/RPA70 and RPA2/RPA32. The super complex between FA and BLM is called BRAFT. Component of the CENPA-CAD complex, composed of CENPI, CENPK, CENPL, CENPO, CENPP, CENPQ, CENPR and CENPS. The CENPA-CAD complex is probably recruited on centromeres by the CENPA-NAC complex, at least composed of CENPA, CENPC, CENPH, CENPM, CENPN, CENPT and CENPU.

It is found in the nucleus. The protein localises to the chromosome. Its subcellular location is the centromere. It localises to the kinetochore. DNA-binding component of the Fanconi anemia (FA) core complex. Required for the normal activation of the FA pathway, leading to monoubiquitination of the FANCI-FANCD2 complex in response to DNA damage, cellular resistance to DNA cross-linking drugs, and prevention of chromosomal breakage. In complex with CENPX (MHF heterodimer), crucial cofactor for FANCM in both binding and ATP-dependent remodeling of DNA. Stabilizes FANCM. In complex with CENPX and FANCM (but not other FANC proteins), rapidly recruited to blocked forks and promotes gene conversion at blocked replication forks. In complex with CENPT, CENPW and CENPX (CENP-T-W-S-X heterotetramer), involved in the formation of a functional kinetochore outer plate, which is essential for kinetochore-microtubule attachment and faithful mitotic progression. As a component of MHF and CENP-T-W-S-X complexes, binds DNA and bends it to form a nucleosome-like structure. DNA-binding function is fulfilled in the presence of CENPX, with the following preference for DNA substates: Holliday junction &gt; double-stranded &gt; splay arm &gt; single-stranded. Does not bind DNA on its own. This Bos taurus (Bovine) protein is Centromere protein S (CENPS).